The chain runs to 190 residues: Xanthine phosphoribosyltransferase (190 aa).

Xanthine is bound by residues L20 and N27. 128–132 (ANGQA) contributes to the 5-phospho-alpha-D-ribose 1-diphosphate binding site. K156 lines the xanthine pocket.

Belongs to the purine/pyrimidine phosphoribosyltransferase family. Xpt subfamily. As to quaternary structure, homodimer.

The protein localises to the cytoplasm. The catalysed reaction is XMP + diphosphate = xanthine + 5-phospho-alpha-D-ribose 1-diphosphate. It participates in purine metabolism; XMP biosynthesis via salvage pathway; XMP from xanthine: step 1/1. In terms of biological role, converts the preformed base xanthine, a product of nucleic acid breakdown, to xanthosine 5'-monophosphate (XMP), so it can be reused for RNA or DNA synthesis. The sequence is that of Xanthine phosphoribosyltransferase from Pediococcus pentosaceus (strain ATCC 25745 / CCUG 21536 / LMG 10740 / 183-1w).